Here is a 364-residue protein sequence, read N- to C-terminus: Phosphoserine aminotransferase (364 aa).

Arg-41 contacts L-glutamate. Residues 75–76 (AS), Trp-100, Thr-155, Asp-175, and Gln-198 contribute to the pyridoxal 5'-phosphate site. Lys-199 is modified (N6-(pyridoxal phosphate)lysine). Residue 239 to 240 (NT) coordinates pyridoxal 5'-phosphate.

Belongs to the class-V pyridoxal-phosphate-dependent aminotransferase family. SerC subfamily. Homodimer. Requires pyridoxal 5'-phosphate as cofactor.

Its subcellular location is the cytoplasm. The catalysed reaction is O-phospho-L-serine + 2-oxoglutarate = 3-phosphooxypyruvate + L-glutamate. It catalyses the reaction 4-(phosphooxy)-L-threonine + 2-oxoglutarate = (R)-3-hydroxy-2-oxo-4-phosphooxybutanoate + L-glutamate. Its pathway is amino-acid biosynthesis; L-serine biosynthesis; L-serine from 3-phospho-D-glycerate: step 2/3. Functionally, catalyzes the reversible conversion of 3-phosphohydroxypyruvate to phosphoserine and of 3-hydroxy-2-oxo-4-phosphonooxybutanoate to phosphohydroxythreonine. The chain is Phosphoserine aminotransferase from Streptococcus thermophilus (strain CNRZ 1066).